We begin with the raw amino-acid sequence, 154 residues long: Protein ripply (154 aa).

Residues 38 to 41 (WRPW) carry the WRPW motif motif. 2 disordered regions span residues 54-86 (IRER…FQHP) and 121-154 (EDPA…PILN). Residues 85–119 (HPVKLHWSKPVYDYMYQYGKQLLDAFPVQATICIV) form a ripply homology domain region. A compositionally biased stretch (acidic residues) spans 121–140 (EDPAQSDDSDFESDYEDDSD).

It belongs to the ripply family. As to expression, in the late gastrula stage, expression appears in the dorsal presomitic mesoderm and in the first three pairs of nascent somites. Expressed strongly in forming somites and then expression is rapidly down-regulated except in the first somite pair where expression is maintained for a longer period. Also expressed in the presumptive notochord and in the tail bud at the 48 hour larval stage. Expression disappears by the 72 hour stage.

Its subcellular location is the nucleus. In terms of biological role, may play a role in somitogenesis. The polypeptide is Protein ripply (Branchiostoma belcheri (Amphioxus)).